The following is a 406-amino-acid chain: Diaminopimelate decarboxylase (406 aa).

An N6-(pyridoxal phosphate)lysine modification is found at K52. Pyridoxal 5'-phosphate is bound by residues G231 and 265 to 268 (EPGR). Residues R268, R304, and Y308 each contribute to the substrate site. The active-site Proton donor is the C334. Positions 335 and 362 each coordinate substrate. Y362 contributes to the pyridoxal 5'-phosphate binding site.

This sequence belongs to the Orn/Lys/Arg decarboxylase class-II family. LysA subfamily. As to quaternary structure, homodimer. It depends on pyridoxal 5'-phosphate as a cofactor.

The catalysed reaction is meso-2,6-diaminopimelate + H(+) = L-lysine + CO2. It participates in amino-acid biosynthesis; L-lysine biosynthesis via DAP pathway; L-lysine from DL-2,6-diaminopimelate: step 1/1. Specifically catalyzes the decarboxylation of meso-diaminopimelate (meso-DAP) to L-lysine. This is Diaminopimelate decarboxylase from Neisseria meningitidis serogroup A / serotype 4A (strain DSM 15465 / Z2491).